Consider the following 827-residue polypeptide: Spastin (827 aa).

The span at 1–13 (MVRNKYTLTTAGK) shows a compositional bias: polar residues. Residues 1–58 (MVRNKYTLTTAGKSPSKKSRTGSLSKQHDATGDDDGETGTLDGSGSAAGSPVGGGTDA) form a disordered region. At 1–79 (MVRNKYTLTT…KQNLYIISFP (79 aa)) the chain is on the cytoplasmic side. Over residues 38–50 (TGTLDGSGSAAGS) the composition is skewed to low complexity. Positions 80–100 (VIFVFNVLRSLLYQLFIVFRY) form an intramembrane region, helical. Residues 101-827 (VYNFTTKVVY…WLQDFGDVTL (727 aa)) lie on the Cytoplasmic side of the membrane. 2 disordered regions span residues 127–190 (QHGH…AHPL) and 207–229 (SIQRSASGSQVGPGDPLLAKQKH). Basic residues predominate over residues 129–141 (GHHHHHHHRHSSH). Residues 142-190 (SIHSTAAAHQLQQHQQQQQHQYSLLQQEQHGVTEPQQQQQQQHQAAHPL) show a composition bias toward low complexity. Residues 231 to 306 (HRRAFEYISK…SMARDRLQFL (76 aa)) enclose the MIT domain. Disordered regions lie at residues 358–381 (HHPARGTAASSRPTTAATAPATPS), 398–433 (VGYKRPGNLGVMNKSQTLPRSMGGTRTTPTGTGGAG), and 476–526 (VSIP…PQIS). Over residues 364–381 (TAASSRPTTAATAPATPS) the composition is skewed to low complexity. Low complexity-rich tracts occupy residues 476–486 (VSIPIPGSSPV) and 510–524 (QQPQQPQQQQQQQPQ). Residue 592–599 (GPPGNGKT) participates in ATP binding.

The protein belongs to the AAA ATPase family. Spastin subfamily. Homohexamer. The homohexamer is stabilized by ATP-binding. The homohexamer may adopt a ring conformation through which microtubules pass prior to being severed. Interacts with microtubules.

The protein resides in the membrane. Its subcellular location is the cytoplasm. The protein localises to the cytoskeleton. It is found in the microtubule organizing center. It localises to the centrosome. The catalysed reaction is n ATP + n H2O + a microtubule = n ADP + n phosphate + (n+1) alpha/beta tubulin heterodimers.. Functionally, ATP-dependent microtubule severing protein. Microtubule severing may promote reorganization of cellular microtubule arrays and the release of microtubules from the microtubule organizing center following nucleation. In Anopheles gambiae (African malaria mosquito), this protein is Spastin (spas).